The chain runs to 190 residues: Nuclear transcription factor Y subunit A-7 (190 aa).

Residues 1 to 33 (MTSSIHELSDNIGSHEKQEQRDSHFQPPIPSAR) form a disordered region. Over residues 7 to 24 (ELSDNIGSHEKQEQRDSH) the composition is skewed to basic and acidic residues. The short motif at 103-126 (FVNAKQYHGILRRRQSRARLESQN) is the Subunit association domain (SAD) element. A DNA-binding region (NFYA/HAP2-type) is located at residues 133 to 158 (KPYLHESRHLHAIRRPRGCGGRFLNA). The tract at residues 147–190 (RPRGCGGRFLNAKKEDEHHEDSSHEEKSNLSAGKSAMAASSGTS) is disordered. Over residues 158-174 (AKKEDEHHEDSSHEEKS) the composition is skewed to basic and acidic residues. The span at 177-190 (SAGKSAMAASSGTS) shows a compositional bias: low complexity.

Belongs to the NFYA/HAP2 subunit family. In terms of assembly, heterotrimeric transcription factor composed of three components, NF-YA, NF-YB and NF-YC. NF-YB and NF-YC must interact and dimerize for NF-YA association and DNA binding.

It is found in the nucleus. Its function is as follows. Stimulates the transcription of various genes by recognizing and binding to a CCAAT motif in promoters. In Arabidopsis thaliana (Mouse-ear cress), this protein is Nuclear transcription factor Y subunit A-7 (NFYA7).